We begin with the raw amino-acid sequence, 186 residues long: Adenine phosphoribosyltransferase (186 aa).

This sequence belongs to the purine/pyrimidine phosphoribosyltransferase family. Homodimer.

Its subcellular location is the cytoplasm. It catalyses the reaction AMP + diphosphate = 5-phospho-alpha-D-ribose 1-diphosphate + adenine. It functions in the pathway purine metabolism; AMP biosynthesis via salvage pathway; AMP from adenine: step 1/1. In terms of biological role, catalyzes a salvage reaction resulting in the formation of AMP, that is energically less costly than de novo synthesis. This is Adenine phosphoribosyltransferase from Sulfurovum sp. (strain NBC37-1).